Reading from the N-terminus, the 612-residue chain is UBA domain-containing protein 6 (612 aa).

One can recognise a UBA domain in the interval 3 to 42; it reads DLDTKIKTLKNMGVSESDAKDSLERCGYDVESAAEFIFSG. Ser595 bears the Phosphoserine mark.

The protein localises to the cytoplasm. It is found in the nucleus. The protein is UBA domain-containing protein 6 (ucp6) of Schizosaccharomyces pombe (strain 972 / ATCC 24843) (Fission yeast).